A 292-amino-acid chain; its full sequence is MSDAPIGIFDSGVGGLTVARAVLDQLPHESVLYVGDTARTPYGPRPIAQVREYSLEILDSLVASGVKALVIACNSASAAMLADARERYEGDGVPVVEVIRPAVRRAAAATRNGRIGVIGTRATISSRAYEDAFAAAPQLQLHTRACPDFVELVEDGETSGPAVLASAHAYLDPLRDAGVDTLVLGCTHYPLLAGAISYVMGEGVTLVSSAEETALDVYRTLVAHDLLRSADGARGDDGARSAPRHRFLATGDPAAFTRLARRFLGPEVDDVHDAVEVTGEIPRITAPLRGTR.

Substrate contacts are provided by residues D10 to S11 and Y42 to G43. C73 acts as the Proton donor/acceptor in catalysis. N74 to S75 serves as a coordination point for substrate. C186 functions as the Proton donor/acceptor in the catalytic mechanism. T187–H188 contributes to the substrate binding site.

This sequence belongs to the aspartate/glutamate racemases family.

It catalyses the reaction L-glutamate = D-glutamate. It participates in cell wall biogenesis; peptidoglycan biosynthesis. Functionally, provides the (R)-glutamate required for cell wall biosynthesis. This chain is Glutamate racemase, found in Beutenbergia cavernae (strain ATCC BAA-8 / DSM 12333 / CCUG 43141 / JCM 11478 / NBRC 16432 / NCIMB 13614 / HKI 0122).